The sequence spans 213 residues: MIMNSTNTVVYIKVKGRRPQGFLDPPKFEWNGTKERQLWTMVSNLNYSQDQIDWQNLSKIFETPEFFLKKRTYKLFAEHLELLQLQLEKKRDLEKYSNDQVNEGMSDLIHKYTPTLQNDNLLNVSASPLTTERQDSEEVETEVTNEALQHLQTSKILNIHKKTSDSENKPNDKLDKDGINKEMECGSSDDDLSSSLSVSKSALEEALMDRLQF.

S106 bears the Phosphoserine mark. The tract at residues 157–196 is disordered; that stretch reads LNIHKKTSDSENKPNDKLDKDGINKEMECGSSDDDLSSSL. Residues 162–184 are compositionally biased toward basic and acidic residues; it reads KTSDSENKPNDKLDKDGINKEME. S187 and S188 each carry phosphoserine.

It belongs to the ATG29 family. In terms of assembly, forms a stable complex with ATG17 and ATG31. Interacts directly with ATG31. The ATG17-ATG29-ATG31 complex interacts with the ATG1-ATG13 complex. Note=The interaction with the ATG1-ATG13 complex is induced by starvation.

Its subcellular location is the preautophagosomal structure. Functionally, plays a role in autophagy. Functions at the preautophagosomal structure (PAS) in order to form normal autophagosomes under starvation conditions. Also plays a role in mitophagy and regulation of filamentous growth. This chain is Autophagy-related protein 29 (ATG29), found in Saccharomyces cerevisiae (strain ATCC 204508 / S288c) (Baker's yeast).